Reading from the N-terminus, the 406-residue chain is Phosphopentomutase (406 aa).

Residues Asp10, Asp305, His310, Asp346, His347, and His358 each coordinate Mn(2+).

The protein belongs to the phosphopentomutase family. Requires Mn(2+) as cofactor.

Its subcellular location is the cytoplasm. The enzyme catalyses 2-deoxy-alpha-D-ribose 1-phosphate = 2-deoxy-D-ribose 5-phosphate. It catalyses the reaction alpha-D-ribose 1-phosphate = D-ribose 5-phosphate. Its pathway is carbohydrate degradation; 2-deoxy-D-ribose 1-phosphate degradation; D-glyceraldehyde 3-phosphate and acetaldehyde from 2-deoxy-alpha-D-ribose 1-phosphate: step 1/2. In terms of biological role, isomerase that catalyzes the conversion of deoxy-ribose 1-phosphate (dRib-1-P) and ribose 1-phosphate (Rib-1-P) to deoxy-ribose 5-phosphate (dRib-5-P) and ribose 5-phosphate (Rib-5-P), respectively. The protein is Phosphopentomutase of Vibrio vulnificus (strain CMCP6).